We begin with the raw amino-acid sequence, 728 residues long: Nucleolar GTP-binding protein 2 (728 aa).

The residue at position 1 (M1) is an N-acetylmethionine. The segment at 1–33 (MVKPKYKGRSTINRSAASTNPDRVQGAGGQNMR) is disordered. Over residues 10 to 22 (STINRSAASTNPD) the composition is skewed to polar residues. In terms of domain architecture, CP-type G spans 207-368 (WGELYKVIDS…LIDCPGVVYP (162 aa)). GTP-binding positions include 317-324 (GYPNVGKS) and 361-365 (DCPGV). Disordered stretches follow at residues 462–521 (PPNA…RNSE), 538–595 (VGPQ…DTKA), and 636–728 (YKEE…RQKQ). A compositionally biased stretch (low complexity) spans 480-489 (EVPTETTQNN). Residues 498-520 (EVERSDSITEKEPEGDCSQDRNS) show a composition bias toward basic and acidic residues. The residue at position 504 (S504) is a Phosphoserine. Residues 553-586 (SDLEDLESSGEEEEQEQEQPGEDAEEERSPDTQE) are compositionally biased toward acidic residues. Over residues 718-728 (KHRRNKFRQKQ) the composition is skewed to basic residues.

It belongs to the TRAFAC class YlqF/YawG GTPase family. NOG2 subfamily. Interacts with LYAR and RPL23A. Interacts with the nuclear importin-beta receptor and, at a lower extent, with importin-alpha.

Its subcellular location is the nucleus. It is found in the nucleolus. GTPase that associates with pre-60S ribosomal subunits in the nucleolus and is required for their nuclear export and maturation. May promote cell proliferation possibly by increasing p53/TP53 protein levels, and consequently those of its downstream product CDKN1A/p21, and decreasing RPL23A protein levels. In Mus musculus (Mouse), this protein is Nucleolar GTP-binding protein 2 (Gnl2).